Here is a 358-residue protein sequence, read N- to C-terminus: 3'(2'),5'-bisphosphate nucleotidase (358 aa).

Catalysis depends on aspartate 52, which acts as the Proton acceptor. Mg(2+) is bound by residues glutamate 78, aspartate 140, isoleucine 142, and aspartate 143. Threonine 145 serves as the catalytic Proton acceptor. 6 residues coordinate adenosine 3',5'-bisphosphate: threonine 145, histidine 239, serine 263, lysine 266, arginine 280, and aspartate 292. Residues histidine 239, serine 263, lysine 266, arginine 280, and aspartate 292 each coordinate AMP. A Mg(2+)-binding site is contributed by aspartate 292.

Belongs to the inositol monophosphatase superfamily. The cofactor is Mg(2+). As to expression, is constitutively transcribed in both roots and shoots.

The enzyme catalyses 3'-phosphoadenylyl sulfate + H2O = adenosine 5'-phosphosulfate + phosphate. It carries out the reaction adenosine 3',5'-bisphosphate + H2O = AMP + phosphate. It catalyses the reaction adenosine 2',5'-bisphosphate + H2O = AMP + phosphate. With respect to regulation, inhibited by Ca(2+), Li(+), and Na(+) and activated by K(+). Functionally, phosphatase that converts adenosine 3'-phosphate 5'-phosphosulfate (PAPS) to adenosine 5'-phosphosulfate (APS) and 3'(2')-phosphoadenosine 5'-phosphate (PAP) to AMP. May regulate the flux of sulfur in the sulfur-activation pathway by converting PAPS to APS. Shows no activity on myo-inositol 1-phosphate, beta-glycerol phosphate, NADPH, NADP and 5'-AMP. This Oryza sativa (Rice) protein is 3'(2'),5'-bisphosphate nucleotidase.